Consider the following 399-residue polypeptide: S-adenosylmethionine synthase (399 aa).

H17 contributes to the ATP binding site. D19 is a Mg(2+) binding site. E52 is a K(+) binding site. L-methionine-binding residues include E65 and Q109. Positions 109–119 are flexible loop; that stretch reads QSADIAQGVDA. ATP-binding positions include 177-179, 243-244, D252, 258-259, A275, and K279; these read DSK, KF, and RK. L-methionine is bound at residue D252. K283 lines the L-methionine pocket.

The protein belongs to the AdoMet synthase family. Homotetramer; dimer of dimers. Mg(2+) serves as cofactor. The cofactor is K(+).

It is found in the cytoplasm. The enzyme catalyses L-methionine + ATP + H2O = S-adenosyl-L-methionine + phosphate + diphosphate. Its pathway is amino-acid biosynthesis; S-adenosyl-L-methionine biosynthesis; S-adenosyl-L-methionine from L-methionine: step 1/1. Its function is as follows. Catalyzes the formation of S-adenosylmethionine (AdoMet) from methionine and ATP. The overall synthetic reaction is composed of two sequential steps, AdoMet formation and the subsequent tripolyphosphate hydrolysis which occurs prior to release of AdoMet from the enzyme. In Bradyrhizobium sp. (strain ORS 278), this protein is S-adenosylmethionine synthase.